Consider the following 144-residue polypeptide: Transcription antitermination protein NusB (144 aa).

Belongs to the NusB family.

Its function is as follows. Involved in transcription antitermination. Required for transcription of ribosomal RNA (rRNA) genes. Binds specifically to the boxA antiterminator sequence of the ribosomal RNA (rrn) operons. This Haemophilus influenzae (strain PittGG) protein is Transcription antitermination protein NusB.